Consider the following 538-residue polypeptide: Phosphoenolpyruvate carboxykinase (ATP) (538 aa).

Substrate contacts are provided by Arg-64, Tyr-205, and Lys-211. ATP is bound by residues Lys-211, His-230, and Gly-246–Thr-254. Mn(2+) is bound by residues Lys-211 and His-230. Asp-267 provides a ligand contact to Mn(2+). Residues Glu-295, Arg-331, Arg-447–Ile-448, and Thr-453 contribute to the ATP site. Arg-331 contributes to the substrate binding site.

Belongs to the phosphoenolpyruvate carboxykinase (ATP) family. As to quaternary structure, monomer. Mn(2+) serves as cofactor.

Its subcellular location is the cytoplasm. It catalyses the reaction oxaloacetate + ATP = phosphoenolpyruvate + ADP + CO2. Its pathway is carbohydrate biosynthesis; gluconeogenesis. Functionally, involved in the gluconeogenesis. Catalyzes the conversion of oxaloacetate (OAA) to phosphoenolpyruvate (PEP) through direct phosphoryl transfer between the nucleoside triphosphate and OAA. This chain is Phosphoenolpyruvate carboxykinase (ATP), found in Mannheimia succiniciproducens (strain KCTC 0769BP / MBEL55E).